A 138-amino-acid polypeptide reads, in one-letter code: Acidic phospholipase A2 CH-E6' (138 aa).

A signal peptide spans 1-16 (MRTLWIVAVLLLGVEG). 7 cysteine pairs are disulfide-bonded: Cys42/Cys131, Cys44/Cys60, Cys59/Cys111, Cys65/Cys138, Cys66/Cys104, Cys73/Cys97, and Cys91/Cys102. The Ca(2+) site is built by Tyr43, Gly45, and Gly47. The active site involves His63. Asp64 contributes to the Ca(2+) binding site. The active site involves Asp105.

The protein belongs to the phospholipase A2 family. Group II subfamily. D49 sub-subfamily. It depends on Ca(2+) as a cofactor. In terms of tissue distribution, expressed by the venom gland.

It localises to the secreted. It carries out the reaction a 1,2-diacyl-sn-glycero-3-phosphocholine + H2O = a 1-acyl-sn-glycero-3-phosphocholine + a fatty acid + H(+). Its function is as follows. Snake venom phospholipase A2 (PLA2) that shows high lipolytic and weak ADP-induced platelet aggregation activities. Also shows weak anticoagulant activity. PLA2 catalyzes the calcium-dependent hydrolysis of the 2-acyl groups in 3-sn-phosphoglycerides. This is Acidic phospholipase A2 CH-E6' from Crotalus horridus (Timber rattlesnake).